We begin with the raw amino-acid sequence, 64 residues long: MVKHKAARICINLECIDCKSNLHKRSNGISRYTTIKNRKNNPSRMELKKFCPYCNMRTIHKEIK.

Belongs to the bacterial ribosomal protein bL33 family.

The protein resides in the plastid. It localises to the chloroplast. This is Large ribosomal subunit protein bL33c (rpl33) from Cyanidium caldarium (Red alga).